The primary structure comprises 112 residues: Putative iron-sulfur cluster insertion protein ErpA (112 aa).

Iron-sulfur cluster is bound by residues Cys-40, Cys-104, and Cys-106.

It belongs to the HesB/IscA family. Homodimer. It depends on iron-sulfur cluster as a cofactor.

Required for insertion of 4Fe-4S clusters. This is Putative iron-sulfur cluster insertion protein ErpA from Neisseria gonorrhoeae (strain ATCC 700825 / FA 1090).